A 400-amino-acid chain; its full sequence is Argininosuccinate synthase (400 aa).

Position 9-17 (9-17 (AYSGGLDTS)) interacts with ATP. Tyr87 contributes to the L-citrulline binding site. Gly117 contacts ATP. L-aspartate contacts are provided by Thr119, Asn123, and Asp124. Asn123 contributes to the L-citrulline binding site. Positions 127, 176, 185, 261, and 273 each coordinate L-citrulline.

The protein belongs to the argininosuccinate synthase family. Type 1 subfamily. Homotetramer.

The protein resides in the cytoplasm. It carries out the reaction L-citrulline + L-aspartate + ATP = 2-(N(omega)-L-arginino)succinate + AMP + diphosphate + H(+). Its pathway is amino-acid biosynthesis; L-arginine biosynthesis; L-arginine from L-ornithine and carbamoyl phosphate: step 2/3. The sequence is that of Argininosuccinate synthase from Chlorobium limicola (strain DSM 245 / NBRC 103803 / 6330).